The primary structure comprises 278 residues: 4-diphosphocytidyl-2-C-methyl-D-erythritol kinase (278 aa).

The active site involves Lys-9. 89-99 (PVASGIGGGSA) is an ATP binding site. The active site involves Asp-128.

This sequence belongs to the GHMP kinase family. IspE subfamily.

The enzyme catalyses 4-CDP-2-C-methyl-D-erythritol + ATP = 4-CDP-2-C-methyl-D-erythritol 2-phosphate + ADP + H(+). It participates in isoprenoid biosynthesis; isopentenyl diphosphate biosynthesis via DXP pathway; isopentenyl diphosphate from 1-deoxy-D-xylulose 5-phosphate: step 3/6. Functionally, catalyzes the phosphorylation of the position 2 hydroxy group of 4-diphosphocytidyl-2C-methyl-D-erythritol. The protein is 4-diphosphocytidyl-2-C-methyl-D-erythritol kinase of Cereibacter sphaeroides (strain ATCC 17025 / ATH 2.4.3) (Rhodobacter sphaeroides).